The sequence spans 500 residues: NAD(P)H-quinone oxidoreductase chain 4, chloroplastic (500 aa).

A run of 14 helical transmembrane segments spans residues Phe3–Phe23, Ile37–Phe57, Gly84–Ala104, Ser111–Phe129, Leu134–Ile154, Phe167–Leu187, Ala208–Ile228, His242–Ile262, Ala272–Ala292, Ile305–Asp325, Gly330–Gly350, Leu386–Thr406, Ile416–Met436, and Leu462–Val482.

This sequence belongs to the complex I subunit 4 family.

Its subcellular location is the plastid. It localises to the chloroplast thylakoid membrane. The catalysed reaction is a plastoquinone + NADH + (n+1) H(+)(in) = a plastoquinol + NAD(+) + n H(+)(out). The enzyme catalyses a plastoquinone + NADPH + (n+1) H(+)(in) = a plastoquinol + NADP(+) + n H(+)(out). This Panax ginseng (Korean ginseng) protein is NAD(P)H-quinone oxidoreductase chain 4, chloroplastic.